A 480-amino-acid polypeptide reads, in one-letter code: Cytochrome b-c1 complex subunit 1, mitochondrial (480 aa).

The N-terminal 34 residues, 1–34 (MAASAVCRAAGAGTRVLLRTRRSPALLRSSDLRG), are a transit peptide targeting the mitochondrion. 2 positions are modified to N6-acetyllysine: lysine 111 and lysine 138. Lysine 163 is modified (N6-acetyllysine; alternate). N6-succinyllysine; alternate is present on lysine 163. Serine 212 carries the post-translational modification Phosphoserine. Lysine 248 bears the N6-acetyllysine mark.

This sequence belongs to the peptidase M16 family. UQCRC1/QCR1 subfamily. In terms of assembly, component of the ubiquinol-cytochrome c oxidoreductase (cytochrome b-c1 complex, complex III, CIII), a multisubunit enzyme composed of 11 subunits. The complex is composed of 3 respiratory subunits cytochrome b, cytochrome c1 and Rieske protein UQCRFS1, 2 core protein subunits UQCRC1/QCR1 and UQCRC2/QCR2, and 6 low-molecular weight protein subunits UQCRH/QCR6, UQCRB/QCR7, UQCRQ/QCR8, UQCR10/QCR9, UQCR11/QCR10 and subunit 9, the cleavage product of Rieske protein UQCRFS1. The complex exists as an obligatory dimer and forms supercomplexes (SCs) in the inner mitochondrial membrane with NADH-ubiquinone oxidoreductase (complex I, CI) and cytochrome c oxidase (complex IV, CIV), resulting in different assemblies (supercomplex SCI(1)III(2)IV(1) and megacomplex MCI(2)III(2)IV(2)). Interacts with UQCC6. Interacts with STMP1.

Its subcellular location is the mitochondrion inner membrane. Functionally, component of the ubiquinol-cytochrome c oxidoreductase, a multisubunit transmembrane complex that is part of the mitochondrial electron transport chain which drives oxidative phosphorylation. The respiratory chain contains 3 multisubunit complexes succinate dehydrogenase (complex II, CII), ubiquinol-cytochrome c oxidoreductase (cytochrome b-c1 complex, complex III, CIII) and cytochrome c oxidase (complex IV, CIV), that cooperate to transfer electrons derived from NADH and succinate to molecular oxygen, creating an electrochemical gradient over the inner membrane that drives transmembrane transport and the ATP synthase. The cytochrome b-c1 complex catalyzes electron transfer from ubiquinol to cytochrome c, linking this redox reaction to translocation of protons across the mitochondrial inner membrane, with protons being carried across the membrane as hydrogens on the quinol. In the process called Q cycle, 2 protons are consumed from the matrix, 4 protons are released into the intermembrane space and 2 electrons are passed to cytochrome c. The 2 core subunits UQCRC1/QCR1 and UQCRC2/QCR2 are homologous to the 2 mitochondrial-processing peptidase (MPP) subunits beta-MPP and alpha-MPP respectively, and they seem to have preserved their MPP processing properties. May be involved in the in situ processing of UQCRFS1 into the mature Rieske protein and its mitochondrial targeting sequence (MTS)/subunit 9 when incorporated into complex III. Seems to play an important role in the maintenance of proper mitochondrial function in nigral dopaminergic neurons. This chain is Cytochrome b-c1 complex subunit 1, mitochondrial (UQCRC1), found in Bos taurus (Bovine).